Consider the following 477-residue polypeptide: Cyclin-A1-2 (477 aa).

The protein belongs to the cyclin family. Cyclin AB subfamily.

The sequence is that of Cyclin-A1-2 (CYCA1-2) from Oryza sativa subsp. japonica (Rice).